An 822-amino-acid polypeptide reads, in one-letter code: AP-1 complex subunit gamma-1 (822 aa).

A disordered region spans residues 597 to 628 (EIVQTNGETEPAPLETKPPPSGPQPTSQANDL). Positions 702–817 (AGIPSITAYS…QDLAEVNNFP (116 aa)) constitute a GAE domain.

This sequence belongs to the adaptor complexes large subunit family. As to quaternary structure, adaptor protein complex 1 (AP-1) is a heterotetramer composed of two large adaptins (gamma-type subunit AP1G1 and beta-type subunit AP1B1), a medium adaptin (mu-type subunit AP1M1 or AP1M2) and a small adaptin (sigma-type subunit AP1S1 or AP1S2 or AP1S3). Interacts (via GAE domain) with RABEP1. Interacts with SYNRG/gamma-synergin. Interacts with EPS15. Interacts (via GAE domain) with AP1AR (via coiled-coil domain). Interacts with CLN3 (via dileucine motif); this interaction facilitates lysosomal targeting. Interacts (via GAE domain) with AFTPH/aftiphilin; the interaction is required to recruit AFTPH/aftiphilin to the perinuclear region of the cell. Widely expressed.

Its subcellular location is the golgi apparatus. It localises to the cytoplasmic vesicle. It is found in the clathrin-coated vesicle membrane. The protein resides in the cytoplasm. The protein localises to the perinuclear region. Its subcellular location is the clathrin-coated vesicle. It localises to the membrane. It is found in the clathrin-coated pit. In terms of biological role, subunit of clathrin-associated adaptor protein complex 1 that plays a role in protein sorting in the late-Golgi/trans-Golgi network (TGN) and/or endosomes. The AP complexes mediate both the recruitment of clathrin to membranes and the recognition of sorting signals within the cytosolic tails of transmembrane cargo molecules. In association with AFTPH/aftiphilin in the aftiphilin/p200/gamma-synergin complex, involved in the trafficking of transferrin from early to recycling endosomes, and the membrane trafficking of furin and the lysosomal enzyme cathepsin D between the trans-Golgi network (TGN) and endosomes. The polypeptide is AP-1 complex subunit gamma-1 (AP1G1) (Homo sapiens (Human)).